A 479-amino-acid chain; its full sequence is Ribosomal RNA small subunit methyltransferase F (479 aa).

Residues 125–131 (AAAPGSK), E149, D176, and D194 contribute to the S-adenosyl-L-methionine site. The active-site Nucleophile is the C247.

Belongs to the class I-like SAM-binding methyltransferase superfamily. RsmB/NOP family.

It localises to the cytoplasm. It catalyses the reaction cytidine(1407) in 16S rRNA + S-adenosyl-L-methionine = 5-methylcytidine(1407) in 16S rRNA + S-adenosyl-L-homocysteine + H(+). In terms of biological role, specifically methylates the cytosine at position 1407 (m5C1407) of 16S rRNA. The polypeptide is Ribosomal RNA small subunit methyltransferase F (Escherichia coli O6:H1 (strain CFT073 / ATCC 700928 / UPEC)).